A 246-amino-acid polypeptide reads, in one-letter code: Probable transcriptional regulatory protein CLJ_B3338 (246 aa).

This sequence belongs to the TACO1 family.

It is found in the cytoplasm. This chain is Probable transcriptional regulatory protein CLJ_B3338, found in Clostridium botulinum (strain 657 / Type Ba4).